The chain runs to 838 residues: Kinesin-like protein KIFC2 (838 aa).

Residues 23–32 are compositionally biased toward low complexity; it reads AAAAEPGDPA. Disordered stretches follow at residues 23 to 48 and 140 to 185; these read AAAA…DLPA and LLQG…GQQP. Positions 156–167 are enriched in polar residues; sequence DGSTSQEESPSH. Positions 186-351 form a coiled coil; that stretch reads LQLEEDQRAW…SLRQGCGDLR (166 aa). Positions 409 to 740 constitute a Kinesin motor domain; sequence NIRVLCRLRP…ARRSPRGRRI (332 aa). 484–491 is an ATP binding site; sequence GQTGTGKT. Positions 718 to 792 are disordered; the sequence is RSPPTRARPP…SPGPPAPLRR (75 aa).

This sequence belongs to the TRAFAC class myosin-kinesin ATPase superfamily. Kinesin family.

It is found in the cytoplasm. Its subcellular location is the cytoskeleton. May play a role in microtubule-dependent retrograde axonal transport. May function as the motor for the transport of multivesicular body (MVB)-like organelles in dendrites. This chain is Kinesin-like protein KIFC2 (KIFC2), found in Homo sapiens (Human).